Consider the following 941-residue polypeptide: Isoleucine--tRNA ligase (941 aa).

The 'HIGH' region signature appears at 59 to 69 (PYANGNIHIGH). Glu-562 is an L-isoleucyl-5'-AMP binding site. The short motif at 603-607 (KMSKS) is the 'KMSKS' region element. Lys-606 is a binding site for ATP. Zn(2+) contacts are provided by Cys-904, Cys-907, Cys-924, and Cys-927.

Belongs to the class-I aminoacyl-tRNA synthetase family. IleS type 1 subfamily. Monomer. Zn(2+) serves as cofactor.

The protein resides in the cytoplasm. The catalysed reaction is tRNA(Ile) + L-isoleucine + ATP = L-isoleucyl-tRNA(Ile) + AMP + diphosphate. Catalyzes the attachment of isoleucine to tRNA(Ile). As IleRS can inadvertently accommodate and process structurally similar amino acids such as valine, to avoid such errors it has two additional distinct tRNA(Ile)-dependent editing activities. One activity is designated as 'pretransfer' editing and involves the hydrolysis of activated Val-AMP. The other activity is designated 'posttransfer' editing and involves deacylation of mischarged Val-tRNA(Ile). This is Isoleucine--tRNA ligase from Haemophilus influenzae (strain 86-028NP).